A 238-amino-acid polypeptide reads, in one-letter code: Uridylate kinase (238 aa).

12-15 (KLSG) contacts ATP. Gly54 contributes to the UMP binding site. ATP is bound by residues Gly55 and Arg59. Residues Asp74 and 135–142 (TGNPYFTT) contribute to the UMP site. Residues Thr162, Asn163, Tyr168, and Asp171 each coordinate ATP.

Belongs to the UMP kinase family. Homohexamer.

The protein resides in the cytoplasm. The enzyme catalyses UMP + ATP = UDP + ADP. Its pathway is pyrimidine metabolism; CTP biosynthesis via de novo pathway; UDP from UMP (UMPK route): step 1/1. With respect to regulation, inhibited by UTP. In terms of biological role, catalyzes the reversible phosphorylation of UMP to UDP. In Nitrobacter hamburgensis (strain DSM 10229 / NCIMB 13809 / X14), this protein is Uridylate kinase.